Here is a 252-residue protein sequence, read N- to C-terminus: Geranylgeranylglyceryl phosphate synthase (252 aa).

Residues Asp-26 and Ser-55 each coordinate Mg(2+). Sn-glycerol 1-phosphate contacts are provided by residues 174-180 (YLEAGSG), 205-206 (GG), and 227-228 (GT).

This sequence belongs to the GGGP/HepGP synthase family. Group II subfamily. The cofactor is Mg(2+).

The protein localises to the cytoplasm. It catalyses the reaction sn-glycerol 1-phosphate + (2E,6E,10E)-geranylgeranyl diphosphate = sn-3-O-(geranylgeranyl)glycerol 1-phosphate + diphosphate. The protein operates within membrane lipid metabolism; glycerophospholipid metabolism. Its function is as follows. Prenyltransferase that catalyzes the transfer of the geranylgeranyl moiety of geranylgeranyl diphosphate (GGPP) to the C3 hydroxyl of sn-glycerol-1-phosphate (G1P). This reaction is the first ether-bond-formation step in the biosynthesis of archaeal membrane lipids. This chain is Geranylgeranylglyceryl phosphate synthase, found in Thermococcus gammatolerans (strain DSM 15229 / JCM 11827 / EJ3).